The following is a 387-amino-acid chain: GDSL esterase/lipase At2g23540 (387 aa).

Residues 1-32 (MATRASTSSRVSPAFTFLVIFFLLSLTASVEA) form the signal peptide. Residue serine 55 is the Nucleophile of the active site. N-linked (GlcNAc...) asparagine glycosylation is found at asparagine 139 and asparagine 159. Catalysis depends on residues aspartate 352 and histidine 355. An N-linked (GlcNAc...) asparagine glycan is attached at asparagine 380.

The protein belongs to the 'GDSL' lipolytic enzyme family.

It is found in the secreted. The polypeptide is GDSL esterase/lipase At2g23540 (Arabidopsis thaliana (Mouse-ear cress)).